We begin with the raw amino-acid sequence, 835 residues long: Protein translocase subunit SecA 1 (835 aa).

Residues glutamine 85, 103-107 (GEGKT), and aspartate 492 each bind ATP. Residues 788-807 (VQGEAVHPSSDGEEAKKKPV) form a disordered region. Residues cysteine 819, cysteine 821, cysteine 830, and cysteine 831 each contribute to the Zn(2+) site.

It belongs to the SecA family. As to quaternary structure, monomer and homodimer. Part of the essential Sec protein translocation apparatus which comprises SecA, SecYEG and auxiliary proteins SecDF. Other proteins may also be involved. It depends on Zn(2+) as a cofactor.

It is found in the cell membrane. Its subcellular location is the cytoplasm. It carries out the reaction ATP + H2O + cellular proteinSide 1 = ADP + phosphate + cellular proteinSide 2.. Functionally, part of the Sec protein translocase complex. Interacts with the SecYEG preprotein conducting channel. Has a central role in coupling the hydrolysis of ATP to the transfer of proteins into and across the cell membrane, serving as an ATP-driven molecular motor driving the stepwise translocation of polypeptide chains across the membrane. This is Protein translocase subunit SecA 1 from Bacillus thuringiensis (strain Al Hakam).